Reading from the N-terminus, the 446-residue chain is Phosphoglucosamine mutase (446 aa).

Serine 99 (phosphoserine intermediate) is an active-site residue. Mg(2+)-binding residues include serine 99, aspartate 242, aspartate 244, and aspartate 246. Serine 99 bears the Phosphoserine mark.

It belongs to the phosphohexose mutase family. It depends on Mg(2+) as a cofactor. Activated by phosphorylation.

The enzyme catalyses alpha-D-glucosamine 1-phosphate = D-glucosamine 6-phosphate. Functionally, catalyzes the conversion of glucosamine-6-phosphate to glucosamine-1-phosphate. The polypeptide is Phosphoglucosamine mutase (Campylobacter concisus (strain 13826)).